A 583-amino-acid chain; its full sequence is uncharacterized protein (583 aa).

The segment covering 1-38 has biased composition (polar residues); it reads MGQGESIPSRQIQRDASMQAVSSESENINDSDRQNSGF. Disordered stretches follow at residues 1-39, 53-124, 156-197, and 362-452; these read MGQG…SGFS, GLRR…AIPQ, TQNN…TAIG, and NSGS…QTDH. The segment covering 70 to 80 has biased composition (basic and acidic residues); sequence GNRDRTTERSA. Positions 88–102 are enriched in low complexity; the sequence is SLLNRNSPSLRSLSP. Composition is skewed to polar residues over residues 156-165, 172-191, 384-408, and 420-452; these read TQNNQSTLAS, VSSS…NLES, LISS…NENV, and ASTA…QTDH. The RING-type zinc-finger motif lies at 525-568; sequence CLVCLSNFELNDECRRLKQCNHFFHRECIDQWLTSSQNSCPLCR. Residue serine 580 is modified to Phosphoserine.

The protein localises to the membrane. This is an uncharacterized protein from Schizosaccharomyces pombe (strain 972 / ATCC 24843) (Fission yeast).